An 858-amino-acid polypeptide reads, in one-letter code: Ubiquitin carboxyl-terminal hydrolase 5 (858 aa).

A2 carries the post-translational modification N-acetylalanine. The interval 73–98 is disordered; the sequence is LRRTRRPKEEDTSAGTGDPPRKKPTR. Residue K113 forms a Glycyl lysine isopeptide (Lys-Gly) (interchain with G-Cter in SUMO) linkage. Phosphoserine occurs at positions 149 and 156. The UBP-type; degenerate zinc-finger motif lies at 175–283; that stretch reads QVSKHAFNLK…EHLSHFGIDM (109 aa). A disulfide bridge connects residues C195 and C816. Residues C199 and C202 each coordinate Zn(2+). W209 contributes to the substrate binding site. C219 contacts Zn(2+). 221 to 224 is a binding site for substrate; it reads RRYF. H232 is a binding site for Zn(2+). Substrate-binding residues include Y259, Y261, and D264. T292 is subject to Phosphothreonine. Residues 326 to 856 form the USP domain; the sequence is TGIRNLGNSC…LGYIYFYQRV (531 aa). Catalysis depends on C335, which acts as the Nucleophile. Residue T623 is modified to Phosphothreonine. UBA domains follow at residues 654–695 and 722–762; these read MLDE…VMSH and PPPE…IFSH. A phosphoserine mark is found at S779, S783, and S785. H818 acts as the Proton acceptor in catalysis.

Belongs to the peptidase C19 family. In terms of assembly, homodimer. Interacts with TRIML1. SUMOylated at Lys-113; SUMOylation affects the interaction with Cav3.2 channels. In terms of processing, ubiquitinated by SMURF1; leading to proteasomal degradation.

The protein resides in the cytoplasm. It localises to the stress granule. The protein localises to the nucleus. It carries out the reaction Thiol-dependent hydrolysis of ester, thioester, amide, peptide and isopeptide bonds formed by the C-terminal Gly of ubiquitin (a 76-residue protein attached to proteins as an intracellular targeting signal).. Deubiquitinating enzyme that participates in a wide range of cellular processes by specifically cleaving isopeptide bonds between ubiquitin and substrate proteins or ubiquitin itself. Affects thereby important cellular signaling pathways such as NF-kappa-B, Wnt/beta-catenin, and cytokine production by regulating ubiquitin-dependent protein degradation. Participates in the activation of the Wnt signaling pathway by promoting FOXM1 deubiquitination and stabilization that induces the recruitment of beta-catenin to Wnt target gene promoter. Regulates the assembly and disassembly of heat-induced stress granules by mediating the hydrolysis of unanchored ubiquitin chains. Promotes lipopolysaccharide-induced apoptosis and inflammatory response by stabilizing the TXNIP protein. Affects T-cell biology by stabilizing the inhibitory receptor on T-cells PDC1. Acts as a negative regulator of autophagy by regulating ULK1 at both protein and mRNA levels. Acts also as a negative regulator of type I interferon production by simultaneously removing both 'Lys-48'-linked unanchored and 'Lys-63'-linked anchored polyubiquitin chains on the transcription factor IRF3. Modulates the stability of DNA mismatch repair protein MLH1 and counteracts the effect of the ubiquitin ligase UBR4. Upon activation by insulin, it gets phosphorylated through mTORC1-mediated phosphorylation to enhance YTHDF1 stability by removing 'Lys-11'-linked polyubiquitination. May also deubiquitinate other substrates such as the calcium channel CACNA1H. In Mus musculus (Mouse), this protein is Ubiquitin carboxyl-terminal hydrolase 5 (Usp5).